Consider the following 112-residue polypeptide: UPF0102 protein Pmob_0702 (112 aa).

The protein belongs to the UPF0102 family.

This chain is UPF0102 protein Pmob_0702, found in Petrotoga mobilis (strain DSM 10674 / SJ95).